We begin with the raw amino-acid sequence, 112 residues long: uncharacterized protein (112 aa).

The N-terminal stretch at 1 to 29 (MINLHRLCIIHVVATLLSTLLSLISVAIS) is a signal peptide. Asn84 carries an N-linked (GlcNAc...) asparagine glycan. Positions 84-112 (NLSKGYNQRPEGSKEESHMVVKEKRKGDH) are disordered. The segment covering 94 to 112 (EGSKEESHMVVKEKRKGDH) has biased composition (basic and acidic residues).

It is found in the secreted. This is an uncharacterized protein from Homo sapiens (Human).